A 546-amino-acid chain; its full sequence is Cytochrome P450 monooxygenase gloP (546 aa).

The chain crosses the membrane as a helical span at residues Thr17–Thr37. N-linked (GlcNAc...) asparagine glycans are attached at residues Asn189, Asn413, and Asn416. Cys492 is a binding site for heme.

It belongs to the cytochrome P450 family. It depends on heme as a cofactor.

It localises to the membrane. It participates in mycotoxin biosynthesis. Functionally, cytochrome P450 monooxygenase; part of the gene cluster that mediates the biosynthesis of pneumocandins, lipohexapeptides of the echinocandin family that prevent fungal cell wall formation by non-competitive inhibition of beta-1,3-glucan synthase. The 10,12-dimethylmyristoyl side chain is synthesized by the reducing polyketide synthase gloL/GLPKS4. The thioesterase gloN/GLHYD exclusively interacts with gloL/GLPKS4 to maintain turnover of the polyketide side chain. The 10R,12S-dimethylmyristic acid is then transferred to the first thiolation domain of the nonribosomal peptide synthetase gloA/GLNRPS4 by the acyl-AMP ligase gloD/GLligase, followed by its acylation to L-ornithine to trigger elongation of the cyclic hexapeptide. L-ornithine, 4R-hydroxyl-L-proline (generated from L-proline by the dioxygenase gloF/GLOXY2), 3S-hydroxyl-L-homotyrosine (generated by gloG/GLHtyB, gloH/GLHtyA, gloI/GLHtyC, gloJ/GLHtyD and hydroxylated at C-3 by the dioxygenase gloM/GLOXY1), 3R-hydroxyl-L-glutamine (generated from L-glutamine probably by the dioxygenase gloE/GLOXY3) and 3S-hydroxyl-L-proline (generated from L-proline by the dioxygenase gloF/GLOXY2 to yield pneumocandin B0), or 3S-hydroxyl-4S-methyl-L-proline (generated from L-leucine by the dioxygenase gloC/GLOXY4 to yield pneumocandin A0) are sequentially added to the growing chain. The last C domain of gloA/GLNRPS4 is proposed to be responsible for cyclization by condensation to form the peptide bond between L-ornithine and 3S-hydroxyl-4S-methyl-L-proline (for pneumocandin A0) or 3S-hydroxyl-L-proline (for pneumocandin B0). Finally, the subsequent C-4 hydroxylation of 3S-hydroxyl-L-homotyrosine and L-ornithine dihydroxylation at C-4 and C-5 are performed by the cytochrome P450 monooxygenases gloP/GLP450-1 and gloO/GLP450-2, respectively. The protein is Cytochrome P450 monooxygenase gloP of Glarea lozoyensis (strain ATCC 20868 / MF5171).